The following is a 159-amino-acid chain: Transcriptional repressor NrdR (159 aa).

A zinc finger spans residues 3–34 (CPFCGGVENKVMDSRVSRDGNAIRRRRECLAC). An ATP-cone domain is found at 49–139 (PTVVKKDGRR…VYRQFRDVND (91 aa)).

The protein belongs to the NrdR family. Requires Zn(2+) as cofactor.

In terms of biological role, negatively regulates transcription of bacterial ribonucleotide reductase nrd genes and operons by binding to NrdR-boxes. This is Transcriptional repressor NrdR from Syntrophus aciditrophicus (strain SB).